We begin with the raw amino-acid sequence, 27 residues long: AGETHTVMINHAGRGAPKLVVGGKKLS.

Its function is as follows. Has antifungal activity against B.cinera, F.oxysporum and P.piricola with IC(50) values of 15.2 uM, 12.4 uM and 18.1 uM, respectively. Lacks hemagglutinating activity towards rabbit erythrocytes. Lacks deoxyribonuclease, ribonuclease and protease inhibitory activities. The polypeptide is Ganodermin (Ganoderma lucidum (Ling zhi medicinal fungus)).